A 33-amino-acid chain; its full sequence is Pardaxin P-4 (33 aa).

This sequence belongs to the pardaxin family. Monomer. In aqueous solution exists as a tetramer.

Its subcellular location is the secreted. It localises to the target cell membrane. Exhibits unusual shark repellent and surfactant properties. Forms voltage-dependent, ion-permeable channels in membranes. At high concentration causes cell membrane lysis. The protein is Pardaxin P-4 of Pardachirus marmoratus (Finless sole).